A 374-amino-acid polypeptide reads, in one-letter code: Putative glutamate--cysteine ligase 2 (374 aa).

This sequence belongs to the glutamate--cysteine ligase type 2 family. YbdK subfamily.

It catalyses the reaction L-cysteine + L-glutamate + ATP = gamma-L-glutamyl-L-cysteine + ADP + phosphate + H(+). In terms of biological role, ATP-dependent carboxylate-amine ligase which exhibits weak glutamate--cysteine ligase activity. This chain is Putative glutamate--cysteine ligase 2, found in Laribacter hongkongensis (strain HLHK9).